A 488-amino-acid chain; its full sequence is 3-octaprenyl-4-hydroxybenzoate carboxy-lyase (488 aa).

Residue N172 coordinates Mn(2+). Prenylated FMN contacts are provided by residues 175–177, 189–191, and 194–195; these read IYR, RWL, and RG. E238 is a binding site for Mn(2+). Catalysis depends on D287, which acts as the Proton donor.

The protein belongs to the UbiD family. As to quaternary structure, homohexamer. The cofactor is prenylated FMN. Requires Mn(2+) as cofactor.

The protein resides in the cell membrane. The catalysed reaction is a 4-hydroxy-3-(all-trans-polyprenyl)benzoate + H(+) = a 2-(all-trans-polyprenyl)phenol + CO2. It participates in cofactor biosynthesis; ubiquinone biosynthesis. In terms of biological role, catalyzes the decarboxylation of 3-octaprenyl-4-hydroxy benzoate to 2-octaprenylphenol, an intermediate step in ubiquinone biosynthesis. The chain is 3-octaprenyl-4-hydroxybenzoate carboxy-lyase from Pseudomonas syringae pv. tomato (strain ATCC BAA-871 / DC3000).